Here is a 370-residue protein sequence, read N- to C-terminus: S-adenosylmethionine:tRNA ribosyltransferase-isomerase (370 aa).

Belongs to the QueA family. Monomer.

It is found in the cytoplasm. The catalysed reaction is 7-aminomethyl-7-carbaguanosine(34) in tRNA + S-adenosyl-L-methionine = epoxyqueuosine(34) in tRNA + adenine + L-methionine + 2 H(+). Its pathway is tRNA modification; tRNA-queuosine biosynthesis. Its function is as follows. Transfers and isomerizes the ribose moiety from AdoMet to the 7-aminomethyl group of 7-deazaguanine (preQ1-tRNA) to give epoxyqueuosine (oQ-tRNA). The protein is S-adenosylmethionine:tRNA ribosyltransferase-isomerase of Prochlorococcus marinus (strain SARG / CCMP1375 / SS120).